The sequence spans 399 residues: Tryptophan synthase beta chain (399 aa).

N6-(pyridoxal phosphate)lysine is present on Lys-92.

Belongs to the TrpB family. Tetramer of two alpha and two beta chains. Pyridoxal 5'-phosphate serves as cofactor.

It catalyses the reaction (1S,2R)-1-C-(indol-3-yl)glycerol 3-phosphate + L-serine = D-glyceraldehyde 3-phosphate + L-tryptophan + H2O. It participates in amino-acid biosynthesis; L-tryptophan biosynthesis; L-tryptophan from chorismate: step 5/5. The beta subunit is responsible for the synthesis of L-tryptophan from indole and L-serine. This chain is Tryptophan synthase beta chain, found in Legionella pneumophila (strain Corby).